The primary structure comprises 137 residues: Putative pre-16S rRNA nuclease (137 aa).

Belongs to the YqgF nuclease family.

It localises to the cytoplasm. Functionally, could be a nuclease involved in processing of the 5'-end of pre-16S rRNA. This is Putative pre-16S rRNA nuclease from Bacillus cereus (strain 03BB102).